The following is a 598-amino-acid chain: (+)-bornyl diphosphate synthase, chloroplastic (598 aa).

A chloroplast-targeting transit peptide spans 1–54; it reads MSIISMNVSILSKPLNCLHNLERRPSKALLVPCTAPTARLRASCSSKLQEAHQI. R314 lines the substrate pocket. Positions 351 and 355 each coordinate Mg(2+). A DDXXD motif motif is present at residues 351 to 355; that stretch reads DDIYD. R493 serves as a coordination point for substrate. Mg(2+) contacts are provided by D496, T500, and E504. Position 500 (T500) interacts with substrate. K512 lines the substrate pocket.

The protein belongs to the terpene synthase family. As to quaternary structure, homodimer. Requires Mg(2+) as cofactor.

Its subcellular location is the plastid. It localises to the chloroplast. It carries out the reaction (2E)-geranyl diphosphate = (2S,4R)-bornyl diphosphate. It catalyses the reaction (2E)-geranyl diphosphate = (1R,4S)-camphene + diphosphate. The enzyme catalyses (2E)-geranyl diphosphate = (1R,5R)-alpha-pinene + diphosphate. It participates in terpene metabolism; (R)-camphor biosynthesis. Catalyzes the formation of the (+)-camphor precursor (+)-bornyl diphosphate from geranyl diphosphate. The enzyme also produces significant amounts of (+)-alpha-pinene, (+)-camphene, and (+-)-limonene. The sequence is that of (+)-bornyl diphosphate synthase, chloroplastic from Salvia officinalis (Sage).